The following is a 310-amino-acid chain: Ribosomal RNA small subunit methyltransferase H (310 aa).

Residues 32-34, D51, F78, D99, and Q106 each bind S-adenosyl-L-methionine; that span reads AGH. The segment at 290-310 is disordered; that stretch reads GELEDNRRSRSAKLRVAEKQK.

It belongs to the methyltransferase superfamily. RsmH family.

The protein localises to the cytoplasm. It catalyses the reaction cytidine(1402) in 16S rRNA + S-adenosyl-L-methionine = N(4)-methylcytidine(1402) in 16S rRNA + S-adenosyl-L-homocysteine + H(+). Its function is as follows. Specifically methylates the N4 position of cytidine in position 1402 (C1402) of 16S rRNA. The chain is Ribosomal RNA small subunit methyltransferase H from Exiguobacterium sp. (strain ATCC BAA-1283 / AT1b).